The chain runs to 278 residues: Probable endonuclease 4 (278 aa).

Zn(2+) contacts are provided by histidine 69, histidine 109, glutamate 145, aspartate 179, histidine 182, histidine 214, aspartate 227, histidine 229, and glutamate 259.

This sequence belongs to the AP endonuclease 2 family. Zn(2+) is required as a cofactor.

The catalysed reaction is Endonucleolytic cleavage to 5'-phosphooligonucleotide end-products.. Its function is as follows. Endonuclease IV plays a role in DNA repair. It cleaves phosphodiester bonds at apurinic or apyrimidinic (AP) sites, generating a 3'-hydroxyl group and a 5'-terminal sugar phosphate. In Bacteroides fragilis (strain ATCC 25285 / DSM 2151 / CCUG 4856 / JCM 11019 / LMG 10263 / NCTC 9343 / Onslow / VPI 2553 / EN-2), this protein is Probable endonuclease 4.